The following is a 338-amino-acid chain: tRNA N6-adenosine threonylcarbamoyltransferase (338 aa).

His-111 and His-115 together coordinate Fe cation. Residues 133–137, Asp-166, Gly-179, Asp-183, and Asn-275 each bind substrate; that span reads LVSGG. Asp-300 provides a ligand contact to Fe cation.

It belongs to the KAE1 / TsaD family. The cofactor is Fe(2+).

It localises to the cytoplasm. The catalysed reaction is L-threonylcarbamoyladenylate + adenosine(37) in tRNA = N(6)-L-threonylcarbamoyladenosine(37) in tRNA + AMP + H(+). Required for the formation of a threonylcarbamoyl group on adenosine at position 37 (t(6)A37) in tRNAs that read codons beginning with adenine. Is involved in the transfer of the threonylcarbamoyl moiety of threonylcarbamoyl-AMP (TC-AMP) to the N6 group of A37, together with TsaE and TsaB. TsaD likely plays a direct catalytic role in this reaction. This chain is tRNA N6-adenosine threonylcarbamoyltransferase, found in Treponema denticola (strain ATCC 35405 / DSM 14222 / CIP 103919 / JCM 8153 / KCTC 15104).